The following is a 182-amino-acid chain: MTEPTGITELLLSRIRDVADYPEPGVVFKDITPLLADPGAFAALTDALAEAAGRTGATKVVGLEARGFILGAPVALRAGLGFIPVRKAGKLPGATLSQAYDLEYGSAEIEVHAEDLTAGDRVLVVDDVLATGGTAEASLELIRRAGAEVAGLAVLMELGFLGGRARLEPALAGAPLEALLTV.

The protein belongs to the purine/pyrimidine phosphoribosyltransferase family. Homodimer.

It is found in the cytoplasm. The catalysed reaction is AMP + diphosphate = 5-phospho-alpha-D-ribose 1-diphosphate + adenine. Its pathway is purine metabolism; AMP biosynthesis via salvage pathway; AMP from adenine: step 1/1. In terms of biological role, catalyzes a salvage reaction resulting in the formation of AMP, that is energically less costly than de novo synthesis. The protein is Adenine phosphoribosyltransferase of Streptomyces coelicolor (strain ATCC BAA-471 / A3(2) / M145).